The following is a 492-amino-acid chain: Glutamyl-tRNA(Gln) amidotransferase subunit A (492 aa).

Active-site charge relay system residues include Lys78 and Ser158. Catalysis depends on Ser182, which acts as the Acyl-ester intermediate.

This sequence belongs to the amidase family. GatA subfamily. As to quaternary structure, heterotrimer of A, B and C subunits.

It catalyses the reaction L-glutamyl-tRNA(Gln) + L-glutamine + ATP + H2O = L-glutaminyl-tRNA(Gln) + L-glutamate + ADP + phosphate + H(+). Allows the formation of correctly charged Gln-tRNA(Gln) through the transamidation of misacylated Glu-tRNA(Gln) in organisms which lack glutaminyl-tRNA synthetase. The reaction takes place in the presence of glutamine and ATP through an activated gamma-phospho-Glu-tRNA(Gln). This is Glutamyl-tRNA(Gln) amidotransferase subunit A from Zymomonas mobilis subsp. mobilis (strain ATCC 31821 / ZM4 / CP4).